The following is a 409-amino-acid chain: Translation initiation factor 2 subunit gamma (409 aa).

Residues 7 to 203 enclose the tr-type G domain; sequence QPEVNIGLVG…AIEREIPTPE (197 aa). A G1 region spans residues 16–23; that stretch reads GHVDHGKT. Residues Asp19, Thr23, Gly44, and Ser46 each contribute to the Mg(2+) site. A GTP-binding site is contributed by 19–24; sequence DHGKTT. Residues 44–48 form a G2 region; that stretch reads GISIR. Residues 90–93 form a G3 region; that stretch reads DAPG. Residues 146-149 and 181-183 contribute to the GTP site; these read NKID and SAQ. The interval 146–149 is G4; it reads NKID. Residues 181–183 form a G5 region; the sequence is SAQ.

This sequence belongs to the TRAFAC class translation factor GTPase superfamily. Classic translation factor GTPase family. EIF2G subfamily. In terms of assembly, heterotrimer composed of an alpha, a beta and a gamma chain. Mg(2+) is required as a cofactor.

The catalysed reaction is GTP + H2O = GDP + phosphate + H(+). Functionally, eIF-2 functions in the early steps of protein synthesis by forming a ternary complex with GTP and initiator tRNA. The protein is Translation initiation factor 2 subunit gamma of Haloquadratum walsbyi (strain DSM 16790 / HBSQ001).